A 197-amino-acid chain; its full sequence is HTH-type transcriptional regulator BetI (197 aa).

The HTH tetR-type domain maps to 8 to 68; sequence PIRRSQLIHA…ATMRHLLSAL (61 aa). The H-T-H motif DNA-binding region spans 31–50; it reads SIALIARLAGVSNGIISHYF.

Its pathway is amine and polyamine biosynthesis; betaine biosynthesis via choline pathway [regulation]. Its function is as follows. Repressor involved in the biosynthesis of the osmoprotectant glycine betaine. It represses transcription of the choline transporter BetT and the genes of BetAB involved in the synthesis of glycine betaine. The protein is HTH-type transcriptional regulator BetI of Pseudomonas aeruginosa (strain LESB58).